The following is an 812-amino-acid chain: DNA translocase FtsK 1 (812 aa).

Residues M1 to K11 show a composition bias toward basic residues. The interval M1 to V36 is disordered. A compositionally biased stretch (basic and acidic residues) spans K25–V36. The next 5 helical transmembrane spans lie at I63–I83, V116–L136, I156–L176, L184–L204, and L210–L230. The Cytoplasmic portion of the chain corresponds to E231 to L812. In terms of domain architecture, FtsK spans G461–R670. Position 481–486 (G481–V486) interacts with ATP.

Belongs to the FtsK/SpoIIIE/SftA family. In terms of assembly, homohexamer. Forms a ring that surrounds DNA.

It is found in the cell inner membrane. Its function is as follows. Essential cell division protein that coordinates cell division and chromosome segregation. The N-terminus is involved in assembly of the cell-division machinery. The C-terminus functions as a DNA motor that moves dsDNA in an ATP-dependent manner towards the dif recombination site, which is located within the replication terminus region. Translocation stops specifically at Xer-dif sites, where FtsK interacts with the Xer recombinase, allowing activation of chromosome unlinking by recombination. FtsK orienting polar sequences (KOPS) guide the direction of DNA translocation. FtsK can remove proteins from DNA as it translocates, but translocation stops specifically at XerCD-dif site, thereby preventing removal of XerC and XerD from dif. The protein is DNA translocase FtsK 1 (ftsK1) of Neisseria meningitidis serogroup A / serotype 4A (strain DSM 15465 / Z2491).